Consider the following 255-residue polypeptide: tRNA (guanine-N(1)-)-methyltransferase (255 aa).

S-adenosyl-L-methionine is bound by residues G117 and 137–142 (LGDFVL).

It belongs to the RNA methyltransferase TrmD family. As to quaternary structure, homodimer.

It is found in the cytoplasm. It carries out the reaction guanosine(37) in tRNA + S-adenosyl-L-methionine = N(1)-methylguanosine(37) in tRNA + S-adenosyl-L-homocysteine + H(+). Specifically methylates guanosine-37 in various tRNAs. The polypeptide is tRNA (guanine-N(1)-)-methyltransferase (Paraburkholderia phymatum (strain DSM 17167 / CIP 108236 / LMG 21445 / STM815) (Burkholderia phymatum)).